The primary structure comprises 211 residues: 2,3-bisphosphoglycerate-dependent phosphoglycerate mutase (211 aa).

Substrate is bound by residues 9-16 (RHGQSDWN), 22-23 (TG), Arg-61, 88-91 (ERDY), Lys-99, 115-116 (RR), and 159-160 (GN). His-10 serves as the catalytic Tele-phosphohistidine intermediate. Residue Glu-88 is the Proton donor/acceptor of the active site.

This sequence belongs to the phosphoglycerate mutase family. BPG-dependent PGAM subfamily. In terms of assembly, homodimer.

It catalyses the reaction (2R)-2-phosphoglycerate = (2R)-3-phosphoglycerate. It functions in the pathway carbohydrate degradation; glycolysis; pyruvate from D-glyceraldehyde 3-phosphate: step 3/5. Its function is as follows. Catalyzes the interconversion of 2-phosphoglycerate and 3-phosphoglycerate. The sequence is that of 2,3-bisphosphoglycerate-dependent phosphoglycerate mutase from Rhizobium meliloti (strain 1021) (Ensifer meliloti).